The sequence spans 137 residues: MCALTSVALVSSAQLGMRWSMSRLPSPGQWLDLQDIGQVQSSAIAVICASITAYALSMLFWLLALRDLPLSRAYSLLSISYALVYTLAATLPFFHETFTVSKTVGVTLIVAGVLTINLRRISSPSLQDLSHENQRFR.

The next 3 helical transmembrane spans lie at 43 to 63 (AIAVICASITAYALSMLFWLL), 74 to 94 (YSLLSISYALVYTLAATLPFF), and 98 to 118 (FTVSKTVGVTLIVAGVLTINL).

It belongs to the ArnF family. As to quaternary structure, heterodimer of ArnE and ArnF.

It is found in the cell inner membrane. The protein operates within bacterial outer membrane biogenesis; lipopolysaccharide biosynthesis. Translocates 4-amino-4-deoxy-L-arabinose-phosphoundecaprenol (alpha-L-Ara4N-phosphoundecaprenol) from the cytoplasmic to the periplasmic side of the inner membrane. This chain is Probable 4-amino-4-deoxy-L-arabinose-phosphoundecaprenol flippase subunit ArnF, found in Pseudomonas savastanoi pv. phaseolicola (strain 1448A / Race 6) (Pseudomonas syringae pv. phaseolicola (strain 1448A / Race 6)).